Consider the following 512-residue polypeptide: ATP synthase subunit alpha (512 aa).

Residue 169-176 (GDRQTGKT) coordinates ATP.

It belongs to the ATPase alpha/beta chains family. In terms of assembly, F-type ATPases have 2 components, CF(1) - the catalytic core - and CF(0) - the membrane proton channel. CF(1) has five subunits: alpha(3), beta(3), gamma(1), delta(1), epsilon(1). CF(0) has three main subunits: a(1), b(2) and c(9-12). The alpha and beta chains form an alternating ring which encloses part of the gamma chain. CF(1) is attached to CF(0) by a central stalk formed by the gamma and epsilon chains, while a peripheral stalk is formed by the delta and b chains.

The protein resides in the cell inner membrane. It carries out the reaction ATP + H2O + 4 H(+)(in) = ADP + phosphate + 5 H(+)(out). Its function is as follows. Produces ATP from ADP in the presence of a proton gradient across the membrane. The alpha chain is a regulatory subunit. This chain is ATP synthase subunit alpha, found in Dechloromonas aromatica (strain RCB).